An 88-amino-acid chain; its full sequence is Protein K3 (88 aa).

The 75-residue stretch at 8-82 folds into the S1 motif domain; it reads LPNAGDVIKG…TKGYIDVNYK (75 aa). Binding to host EIF2AK2/PKR regions lie at residues 43–53 and 74–79; these read SVKMHMDRYVE and KGYIDV.

Belongs to the poxviridae K3 protein family. As to quaternary structure, interacts with host EIF2AK2/PKR kinase.

Its function is as follows. Viral mimic of EIF2S1/eIF-2alpha that acts as a pseudosubstrate for EIF2AK2/PKR kinase. Inhibits therefore EIF2S1/eIF-2alpha phosphorylation by host EIF2AK2/PKR kinase and prevents protein synthesis shutoff. Determinant of host species specificity. This chain is Protein K3, found in Vaccinia virus (strain Western Reserve) (VACV).